Reading from the N-terminus, the 511-residue chain is Ribonuclease Y (511 aa).

The helical transmembrane segment at 2 to 22 threads the bilayer; the sequence is ITTVIIAIVCFAVGGGLSYML. The KH domain occupies 201-261; it reads SVTVFHIESD…VRREIARLAL (61 aa). Positions 327-420 constitute an HD domain; sequence LLQHARETAN…VQVCDAISGA (94 aa).

Belongs to the RNase Y family.

It is found in the cell membrane. In terms of biological role, endoribonuclease that initiates mRNA decay. The sequence is that of Ribonuclease Y from Phocaeicola vulgatus (strain ATCC 8482 / DSM 1447 / JCM 5826 / CCUG 4940 / NBRC 14291 / NCTC 11154) (Bacteroides vulgatus).